Here is a 3623-residue protein sequence, read N- to C-terminus: Cubilin (3623 aa).

The first 23 residues, 1-23, serve as a signal peptide directing secretion; that stretch reads MMNMSLPFLWSLLTLLIFAEVNG. Positions 24–35 are cleaved as a propeptide — removed in mature form; sequence EAGELELQRQKR. The interval 42 to 49 is interaction with AMN; it reads PRMATERG. N-linked (GlcNAc...) asparagine glycosylation occurs at N105. An EGF-like 1 domain is found at 132-168; the sequence is DKKVCSSNPCQNGGTCLNLHDSFFCICPPQWKGPLCS. Disulfide bonds link C136/C147, C141/C156, C158/C167, C174/C190, C184/C199, C201/C210, C267/C280, C274/C289, and C292/C303. The region spanning 170–211 is the EGF-like 2; calcium-binding domain; sequence DVNECEIYSGTPLSCQNGGTCVNTMGSYSCHCPPETYGPQCA. The EGF-like 3; calcium-binding domain occupies 263-304; sequence DRDECSFQPGPCSTLVQCFNTQGSFYCGACPTGWQGNGYICE. Residues 305–348 form the EGF-like 4; calcium-binding domain; sequence DINECEINNGGCSVAPPVECVNTPGSSHCQACPPGYQGDGRVCT. EGF-like domains are found at residues 349 to 385 and 395 to 430; these read LTDI…YTGN and LSNI…VNCT. 13 cysteine pairs are disulfide-bonded: C353–C366, C360–C376, C399–C409, C404–C418, C420–C429, C436–C447, C441–C456, C458–C467, C474–C500, C527–C549, C590–C616, C643–C665, and C708–C734. An N-linked (GlcNAc...) asparagine glycan is attached at N428. Residues 432 to 468 enclose the EGF-like 7; calcium-binding domain; it reads NINECLSNPCLNGGTCVDGVDSFSCECTRLWTGALCQ. CUB domains are found at residues 474-586, 590-702, 708-816, 816-928, 932-1042, 1048-1161, 1165-1277, 1278-1389, 1391-1506, 1510-1619, 1620-1734, 1738-1850, 1852-1963, 1978-2091, 2092-2213, 2217-2334, 2336-2448, 2452-2565, 2570-2687, 2689-2801, 2805-2919, 2920-3035, 3037-3150, 3157-3274, 3278-3393, 3395-3507, and 3511-3623; these read CGES…WETQ, CGGI…YLTS, CGGN…YQVA, ACGD…FSAE, CGEI…YEAI, CLQD…WDGS, CGGN…YRQT, CENV…WFVY, CGGE…WQAV, CGGI…FRQA, CGGH…VTAS, CGGT…FMKI, GNDN…WFAV, CGGF…FHKS, CGGY…YEAK, CGGN…YSIA, CGGR…FESS, CGGD…YTSS, CGGS…YSFT, CGGI…WNTQ, CGGI…FVSR, CGSN…YRII, CGGV…FRQT, CGGY…YTIM, CGGT…YQIA, CNRD…WTSS, and CGGT…TWDS. A glycan (N-linked (GlcNAc...) asparagine) is linked at N482. N711, N749, N781, and N857 each carry an N-linked (GlcNAc...) asparagine glycan. Disulfide bonds link C869/C891 and C932/C958. Residue N957 is glycosylated (N-linked (GlcNAc...) asparagine). E980 lines the Ca(2+) pocket. N-linked (GlcNAc...) asparagine glycosylation is present at N984. A disulfide bond links C985 and C1005. Residues D988, D1027, D1029, and L1030 each coordinate Ca(2+). C1048 and C1074 form a disulfide bridge. An N-linked (GlcNAc...) asparagine glycan is attached at N1092. Ca(2+)-binding residues include E1096, D1105, D1146, I1148, and D1149. An intrachain disulfide couples C1165 to C1191. N-linked (GlcNAc...) asparagine glycosylation occurs at N1168. E1213 is a Ca(2+) binding site. An N-linked (GlcNAc...) asparagine glycan is attached at N1217. C1218 and C1240 are joined by a disulfide. The Ca(2+) site is built by D1221, D1262, G1264, and Q1265. C1278 and C1306 form a disulfide bridge. N-linked (GlcNAc...) asparagine glycosylation is found at N1285, N1307, and N1319. E1328 is a Ca(2+) binding site. A glycan (N-linked (GlcNAc...) asparagine) is linked at N1332. C1333 and C1351 are joined by a disulfide. 3 residues coordinate Ca(2+): D1336, D1373, and V1375. Cystine bridges form between C1391/C1417 and C1444/C1466. N-linked (GlcNAc...) asparagine glycosylation occurs at N1500. The cysteines at positions 1510 and 1536 are disulfide-linked. N1551 is a glycosylation site (N-linked (GlcNAc...) asparagine). Intrachain disulfides connect C1563–C1581, C1620–C1647, C1675–C1697, C1738–C1764, and C1791–C1812. N-linked (GlcNAc...) asparagine glycosylation is present at N1646. Residues N1802, N1819, and N1885 are each glycosylated (N-linked (GlcNAc...) asparagine). 3 disulfide bridges follow: C1905/C1927, C1978/C2006, and C2032/C2054. 2 N-linked (GlcNAc...) asparagine glycosylation sites follow: N2085 and N2117. Disulfide bonds link C2092–C2118 and C2217–C2247. N-linked (GlcNAc...) asparagine glycosylation occurs at N2274. Disulfide bonds link C2275–C2297 and C2336–C2363. N-linked (GlcNAc...) asparagine glycans are attached at residues N2386 and N2400. Disulfide bonds link C2390–C2411, C2452–C2478, and C2505–C2527. Residues N2531, N2581, N2592, and N2610 are each glycosylated (N-linked (GlcNAc...) asparagine). The cysteines at positions 2570 and 2599 are disulfide-linked. 7 disulfide bridges follow: C2628–C2649, C2689–C2715, C2742–C2764, C2805–C2831, C2860–C2883, C2920–C2946, and C2977–C2999. N-linked (GlcNAc...) asparagine glycosylation is present at N2813. N-linked (GlcNAc...) asparagine glycans are attached at residues N2923 and N2945. T3008 carries the phosphothreonine modification. Cystine bridges form between C3037–C3064 and C3091–C3113. Residues N3042, N3103, N3125, and N3165 are each glycosylated (N-linked (GlcNAc...) asparagine). 2 disulfide bridges follow: C3157/C3185 and C3215/C3237. N-linked (GlcNAc...) asparagine glycans are attached at residues N3268, N3283, N3290, and N3295. Cystine bridges form between C3278/C3306 and C3332/C3354. An N-linked (GlcNAc...) asparagine glycan is attached at N3357. Residues C3395 and C3421 are joined by a disulfide bond. N-linked (GlcNAc...) asparagine glycosylation is found at N3430, N3457, N3533, and N3576. Cystine bridges form between C3448/C3470, C3511/C3537, and C3564/C3586.

In terms of assembly, interacts with AMN. Component of the cubam complex composed of one CUBN trimer and one AMN chain. The cubam complex can dimerize. Interacts with LRP2 in a dual-receptor complex in a calcium-dependent manner. Found in a complex with PID1/PCLI1, LRP1 and CUBNI. Interacts with LRP1 and PID1/PCLI1. In terms of processing, the precursor is cleaved by a trans-Golgi proteinase furin, removing a propeptide. Post-translationally, N-glycosylated. Detected in kidney cortex (at protein level). Expressed in kidney proximal tubule cells, placenta, visceral yolk-sac cells and in absorptive intestinal cells. Expressed in the epithelium of intestine and kidney.

Its subcellular location is the apical cell membrane. The protein resides in the cell membrane. The protein localises to the membrane. It localises to the coated pit. It is found in the endosome. Its subcellular location is the lysosome membrane. Endocytic receptor which plays a role in lipoprotein, vitamin and iron metabolism by facilitating their uptake. Acts together with LRP2 to mediate endocytosis of high-density lipoproteins, GC, hemoglobin, ALB, TF and SCGB1A1. Acts together with AMN to mediate endocytosis of the CBLIF-cobalamin complex. Binds to ALB, MB, Kappa and lambda-light chains, TF, hemoglobin, GC, SCGB1A1, APOA1, high density lipoprotein, and the CBLIF-cobalamin complex. Ligand binding requires calcium. Serves as important transporter in several absorptive epithelia, including intestine, renal proximal tubules and embryonic yolk sac. May play an important role in the development of the peri-implantation embryo through internalization of APOA1 and cholesterol. Binds to LGALS3 at the maternal-fetal interface. The polypeptide is Cubilin (CUBN) (Homo sapiens (Human)).